The following is a 180-amino-acid chain: Large ribosomal subunit protein uL5 (180 aa).

This sequence belongs to the universal ribosomal protein uL5 family. In terms of assembly, part of the 50S ribosomal subunit; part of the 5S rRNA/L5/L18/L25 subcomplex. Contacts the 5S rRNA and the P site tRNA. Forms a bridge to the 30S subunit in the 70S ribosome.

This is one of the proteins that bind and probably mediate the attachment of the 5S RNA into the large ribosomal subunit, where it forms part of the central protuberance. In the 70S ribosome it contacts protein S13 of the 30S subunit (bridge B1b), connecting the 2 subunits; this bridge is implicated in subunit movement. Contacts the P site tRNA; the 5S rRNA and some of its associated proteins might help stabilize positioning of ribosome-bound tRNAs. The sequence is that of Large ribosomal subunit protein uL5 from Streptococcus pneumoniae (strain JJA).